We begin with the raw amino-acid sequence, 80 residues long: WAP four-disulfide core domain protein 15A (80 aa).

The signal sequence occupies residues 1 to 20 (MKPSSLLLFTTTILLCLSMA). One can recognise a WAP domain in the interval 29–76 (VTPKQGYCPEFLLDCPFVLLPVCSRDKGCKGTKKCCFYYCQMRCVEPW). Disulfide bonds link Cys36/Cys64, Cys43/Cys68, Cys51/Cys63, and Cys57/Cys72.

It is found in the secreted. Its function is as follows. Antibacterial protein. The protein is WAP four-disulfide core domain protein 15A of Mus musculus (Mouse).